The sequence spans 449 residues: Na(+)-translocating NADH-quinone reductase subunit A (449 aa).

This sequence belongs to the NqrA family. In terms of assembly, composed of six subunits; NqrA, NqrB, NqrC, NqrD, NqrE and NqrF.

The enzyme catalyses a ubiquinone + n Na(+)(in) + NADH + H(+) = a ubiquinol + n Na(+)(out) + NAD(+). Its function is as follows. NQR complex catalyzes the reduction of ubiquinone-1 to ubiquinol by two successive reactions, coupled with the transport of Na(+) ions from the cytoplasm to the periplasm. NqrA to NqrE are probably involved in the second step, the conversion of ubisemiquinone to ubiquinol. In Serratia proteamaculans (strain 568), this protein is Na(+)-translocating NADH-quinone reductase subunit A.